A 250-amino-acid polypeptide reads, in one-letter code: Putative inactive flavonol synthase 2 (250 aa).

The region spanning 171 to 250 (TEYVMRINNY…EQWKVQECVA (80 aa)) is the Fe2OG dioxygenase domain. Fe cation-binding residues include His195 and Asp197.

The protein belongs to the iron/ascorbate-dependent oxidoreductase family.

In Arabidopsis thaliana (Mouse-ear cress), this protein is Putative inactive flavonol synthase 2 (FLS2).